Here is a 745-residue protein sequence, read N- to C-terminus: TonB-dependent heme receptor A (745 aa).

Positions 1-24 (MNILINKRIFLLVTLVGIQLNVTA) are cleaved as a signal peptide. The 113-residue stretch at 45-157 (DDSNKLPGRS…FAGTVKFETK (113 aa)) folds into the TBDR plug domain. The TBDR beta-barrel domain occupies 168-745 (KIGGFLKYGN…NIKFSLSQKF (578 aa)).

It belongs to the TonB-dependent receptor family.

It localises to the cell outer membrane. Its function is as follows. Heme receptor. The polypeptide is TonB-dependent heme receptor A (tdhA) (Haemophilus influenzae (strain 86-028NP)).